The sequence spans 250 residues: 3-deoxy-manno-octulosonate cytidylyltransferase (250 aa).

The protein belongs to the KdsB family.

The protein resides in the cytoplasm. It catalyses the reaction 3-deoxy-alpha-D-manno-oct-2-ulosonate + CTP = CMP-3-deoxy-beta-D-manno-octulosonate + diphosphate. It participates in nucleotide-sugar biosynthesis; CMP-3-deoxy-D-manno-octulosonate biosynthesis; CMP-3-deoxy-D-manno-octulosonate from 3-deoxy-D-manno-octulosonate and CTP: step 1/1. Its pathway is bacterial outer membrane biogenesis; lipopolysaccharide biosynthesis. In terms of biological role, activates KDO (a required 8-carbon sugar) for incorporation into bacterial lipopolysaccharide in Gram-negative bacteria. The polypeptide is 3-deoxy-manno-octulosonate cytidylyltransferase (Cytophaga hutchinsonii (strain ATCC 33406 / DSM 1761 / CIP 103989 / NBRC 15051 / NCIMB 9469 / D465)).